Here is a 1368-residue protein sequence, read N- to C-terminus: DNA-directed RNA polymerase subunit beta (1368 aa).

The protein belongs to the RNA polymerase beta chain family. In terms of assembly, the RNAP catalytic core consists of 2 alpha, 1 beta, 1 beta' and 1 omega subunit. When a sigma factor is associated with the core the holoenzyme is formed, which can initiate transcription.

It catalyses the reaction RNA(n) + a ribonucleoside 5'-triphosphate = RNA(n+1) + diphosphate. Its function is as follows. DNA-dependent RNA polymerase catalyzes the transcription of DNA into RNA using the four ribonucleoside triphosphates as substrates. This Herminiimonas arsenicoxydans protein is DNA-directed RNA polymerase subunit beta.